The primary structure comprises 195 residues: Peptidyl-tRNA hydrolase (195 aa).

Tyr-14 serves as a coordination point for tRNA. His-19 acts as the Proton acceptor in catalysis. Positions 64 and 66 each coordinate tRNA.

The protein belongs to the PTH family. As to quaternary structure, monomer.

It is found in the cytoplasm. The enzyme catalyses an N-acyl-L-alpha-aminoacyl-tRNA + H2O = an N-acyl-L-amino acid + a tRNA + H(+). Hydrolyzes ribosome-free peptidyl-tRNAs (with 1 or more amino acids incorporated), which drop off the ribosome during protein synthesis, or as a result of ribosome stalling. In terms of biological role, catalyzes the release of premature peptidyl moieties from peptidyl-tRNA molecules trapped in stalled 50S ribosomal subunits, and thus maintains levels of free tRNAs and 50S ribosomes. This chain is Peptidyl-tRNA hydrolase, found in Desulforudis audaxviator (strain MP104C).